The chain runs to 156 residues: 6,7-dimethyl-8-ribityllumazine synthase (156 aa).

5-amino-6-(D-ribitylamino)uracil contacts are provided by residues Phe-23, 57–59, and 81–83; these read AYE and AII. (2S)-2-hydroxy-3-oxobutyl phosphate is bound at residue 86-87; sequence ST. The Proton donor role is filled by His-89. Phe-114 provides a ligand contact to 5-amino-6-(D-ribitylamino)uracil. Arg-128 provides a ligand contact to (2S)-2-hydroxy-3-oxobutyl phosphate.

Belongs to the DMRL synthase family.

It catalyses the reaction (2S)-2-hydroxy-3-oxobutyl phosphate + 5-amino-6-(D-ribitylamino)uracil = 6,7-dimethyl-8-(1-D-ribityl)lumazine + phosphate + 2 H2O + H(+). The protein operates within cofactor biosynthesis; riboflavin biosynthesis; riboflavin from 2-hydroxy-3-oxobutyl phosphate and 5-amino-6-(D-ribitylamino)uracil: step 1/2. Catalyzes the formation of 6,7-dimethyl-8-ribityllumazine by condensation of 5-amino-6-(D-ribitylamino)uracil with 3,4-dihydroxy-2-butanone 4-phosphate. This is the penultimate step in the biosynthesis of riboflavin. The protein is 6,7-dimethyl-8-ribityllumazine synthase of Campylobacter hominis (strain ATCC BAA-381 / DSM 21671 / CCUG 45161 / LMG 19568 / NCTC 13146 / CH001A).